A 731-amino-acid polypeptide reads, in one-letter code: NADH-ubiquinone oxidoreductase 75 kDa subunit, mitochondrial (731 aa).

The N-terminal 27 residues, 1-27 (MIRAPLVKALGALGSPTHQMASRAVRT), are a transit peptide targeting the mitochondrion. The 2Fe-2S ferredoxin-type domain occupies 40–118 (EKIEVFVDDI…GWRIKTNSDL (79 aa)). Residues Cys-74, Cys-85, Cys-88, and Cys-102 each contribute to the [2Fe-2S] cluster site. One can recognise a 4Fe-4S His(Cys)3-ligated-type domain in the interval 118–157 (LTRKAREGVMEFLLMNHPLDCPICDQGGECDLQDQAMAFG). [4Fe-4S] cluster is bound by residues His-134, Cys-138, Cys-141, Cys-147, Cys-190, Cys-193, Cys-196, and Cys-240. In terms of domain architecture, 4Fe-4S Mo/W bis-MGD-type spans 259–315 (IRKVSSIDVLDAVGSNIVVSTRTNEVLRILPRENEDVNEEWLADKSRFACDGLKRQR).

This sequence belongs to the complex I 75 kDa subunit family. As to quaternary structure, complex I is composed of about 45 different subunits. It depends on [2Fe-2S] cluster as a cofactor. Requires [4Fe-4S] cluster as cofactor.

Its subcellular location is the mitochondrion inner membrane. The enzyme catalyses a ubiquinone + NADH + 5 H(+)(in) = a ubiquinol + NAD(+) + 4 H(+)(out). In terms of biological role, core subunit of the mitochondrial membrane respiratory chain NADH dehydrogenase (Complex I) that is believed to belong to the minimal assembly required for catalysis. Complex I functions in the transfer of electrons from NADH to the respiratory chain. The immediate electron acceptor for the enzyme is believed to be ubiquinone. This is the largest subunit of complex I and it is a component of the iron-sulfur (IP) fragment of the enzyme. It may form part of the active site crevice where NADH is oxidized. The protein is NADH-ubiquinone oxidoreductase 75 kDa subunit, mitochondrial of Drosophila melanogaster (Fruit fly).